The chain runs to 376 residues: C2H2 type master regulator of conidiophore development brlA (376 aa).

Positions 20–29 (TSFSSASSSA) are enriched in low complexity. Disordered stretches follow at residues 20-47 (TSFS…ELSL), 197-229 (HHHH…ASPN), and 241-267 (EAQR…PESG). Residues 34–44 (TPSSRRSTPNE) are compositionally biased toward polar residues. Residues 197 to 209 (HHHHHNHHQHHHA) show a composition bias toward basic residues. A compositionally biased stretch (polar residues) spans 219 to 229 (QLHSNTGASPN). The span at 241–256 (EAQRKTSELQRAQIRE) shows a compositional bias: basic and acidic residues. Residues 277 to 301 (CKCDYPGCNKAFRRNEHLKRHKQTF) form a C2H2-type 1; degenerate zinc finger. A C2H2-type 2 zinc finger spans residues 309-332 (FSCEFCGKDQFNRQDNLNNHRKLH). The tract at residues 351–376 (IIEHEERSRKRRAPPKSKAEKRDYDF) is disordered. Over residues 367–376 (SKAEKRDYDF) the composition is skewed to basic and acidic residues.

Its subcellular location is the nucleus. BrlA, abaA and wetA are pivotal regulators of conidiophore development and conidium maturation. They act individually and together to regulate their own expression and that of numerous other sporulation-specific genes. Binds promoters of target genes at brlA response elements (BREs) containing the conserved sequence 5'-(C/A)(A/G)AGGG(G/A)-3'. The chain is C2H2 type master regulator of conidiophore development brlA from Hapsidospora chrysogena (Acremonium chrysogenum).